The primary structure comprises 420 residues: uncharacterized protein (420 aa).

The N-terminal stretch at Met-1–Gly-25 is a signal peptide. Cys-26 is modified (N-acetylcysteine). Cys-26 carries S-archaeol cysteine lipidation.

The protein belongs to the bacterial solute-binding protein 1 family.

It localises to the cell membrane. Functionally, probably part of a binding-protein-dependent transport system PH1036/38/39. This is an uncharacterized protein from Pyrococcus horikoshii (strain ATCC 700860 / DSM 12428 / JCM 9974 / NBRC 100139 / OT-3).